The sequence spans 512 residues: Maturase K (512 aa).

Belongs to the intron maturase 2 family. MatK subfamily.

It localises to the plastid. The protein resides in the chloroplast. Usually encoded in the trnK tRNA gene intron. Probably assists in splicing its own and other chloroplast group II introns. This chain is Maturase K, found in Ginkgo biloba (Ginkgo).